The sequence spans 726 residues: Penicillin-binding protein 1A (726 aa).

The Cytoplasmic segment spans residues 1-3 (MKK). The helical; Signal-anchor for type II membrane protein transmembrane segment at 4–24 (LVIGILGIVIALFVGLLVFLI) threads the bilayer. Over 25–726 (PIYKNLPDPK…SDLNAILGLR (702 aa)) the chain is Periplasmic. The segment at 45–213 (SEVYDAKGRL…AKYNPFYHPE (169 aa)) is transglycosylase. E83 functions as the Proton donor; for transglycosylase activity in the catalytic mechanism. The interval 379–662 (KYLGGNRAEI…SRVALPIWID (284 aa)) is transpeptidase. The active-site Acyl-ester intermediate; for transpeptidase activity is S432.

In the N-terminal section; belongs to the glycosyltransferase 51 family. The protein in the C-terminal section; belongs to the transpeptidase family.

The protein resides in the cell inner membrane. It catalyses the reaction [GlcNAc-(1-&gt;4)-Mur2Ac(oyl-L-Ala-gamma-D-Glu-L-Lys-D-Ala-D-Ala)](n)-di-trans,octa-cis-undecaprenyl diphosphate + beta-D-GlcNAc-(1-&gt;4)-Mur2Ac(oyl-L-Ala-gamma-D-Glu-L-Lys-D-Ala-D-Ala)-di-trans,octa-cis-undecaprenyl diphosphate = [GlcNAc-(1-&gt;4)-Mur2Ac(oyl-L-Ala-gamma-D-Glu-L-Lys-D-Ala-D-Ala)](n+1)-di-trans,octa-cis-undecaprenyl diphosphate + di-trans,octa-cis-undecaprenyl diphosphate + H(+). The enzyme catalyses Preferential cleavage: (Ac)2-L-Lys-D-Ala-|-D-Ala. Also transpeptidation of peptidyl-alanyl moieties that are N-acyl substituents of D-alanine.. Its pathway is cell wall biogenesis; peptidoglycan biosynthesis. The chain is Penicillin-binding protein 1A (mrcA) from Aquifex aeolicus (strain VF5).